The following is a 538-amino-acid chain: ATP synthase subunit alpha, mitochondrial (538 aa).

Gly-197–Thr-204 lines the ATP pocket. An essential and sufficient for enterobactin binding region spans residues Phe-228–Leu-248.

Belongs to the ATPase alpha/beta chains family. Subunit of the F-type ATPase which has 2 components, CF(1) - the catalytic core - and CF(0) - the membrane proton channel. As to expression, ubiquitous (at protein level).

Its subcellular location is the mitochondrion. It localises to the mitochondrion inner membrane. In terms of biological role, mitochondrial membrane ATP synthase (F(1)F(0) ATP synthase or Complex V) produces ATP from ADP in the presence of a proton gradient across the membrane which is generated by electron transport complexes of the respiratory chain. F-type ATPases consist of two structural domains, F(1) - containing the extramembraneous catalytic core, and F(0) - containing the membrane proton channel, linked together by a central stalk and a peripheral stalk. During catalysis, ATP synthesis in the catalytic domain of F(1) is coupled via a rotary mechanism of the central stalk subunits to proton translocation. Subunits alpha and beta form the catalytic core in F(1). Rotation of the central stalk against the surrounding subunits leads to hydrolysis of ATP in three separate catalytic sites on the beta subunits. Subunit alpha does not bear the catalytic high-affinity ATP-binding sites. Binds the bacterial siderophore enterobactin and is required for the assimilation of enterobactin-bound iron from non-pathogenic bacteria. Promotes mitochondrial accumulation of enterobactin-derived iron ions. The protein is ATP synthase subunit alpha, mitochondrial of Caenorhabditis elegans.